A 266-amino-acid chain; its full sequence is Glutamate racemase (266 aa).

Residues 9–10 and 41–42 each bind substrate; these read DS and YG. Catalysis depends on cysteine 72, which acts as the Proton donor/acceptor. 73–74 lines the substrate pocket; that stretch reads NT. The active-site Proton donor/acceptor is the cysteine 183. Residue 184–185 coordinates substrate; that stretch reads TH.

This sequence belongs to the aspartate/glutamate racemases family.

It catalyses the reaction L-glutamate = D-glutamate. The protein operates within cell wall biogenesis; peptidoglycan biosynthesis. In terms of biological role, provides the (R)-glutamate required for cell wall biosynthesis. The chain is Glutamate racemase from Listeria monocytogenes serotype 4a (strain HCC23).